The primary structure comprises 270 residues: D-aminoacyl-tRNA deacylase (270 aa).

This sequence belongs to the DtdA deacylase family. As to quaternary structure, monomer. Requires Zn(2+) as cofactor.

The enzyme catalyses a D-aminoacyl-tRNA + H2O = a tRNA + a D-alpha-amino acid + H(+). The catalysed reaction is glycyl-tRNA(Ala) + H2O = tRNA(Ala) + glycine + H(+). Its function is as follows. D-aminoacyl-tRNA deacylase with broad substrate specificity. By recycling D-aminoacyl-tRNA to D-amino acids and free tRNA molecules, this enzyme counteracts the toxicity associated with the formation of D-aminoacyl-tRNA entities in vivo. This Pyrococcus furiosus (strain ATCC 43587 / DSM 3638 / JCM 8422 / Vc1) protein is D-aminoacyl-tRNA deacylase.